The following is a 57-amino-acid chain: UPF0337 protein SCO0678 (57 aa).

2 stretches are compositionally biased toward basic and acidic residues: residues Met-1–Ala-22 and Gly-42–His-57. A disordered region spans residues Met-1–His-57.

The protein belongs to the UPF0337 (CsbD) family.

The polypeptide is UPF0337 protein SCO0678 (Streptomyces coelicolor (strain ATCC BAA-471 / A3(2) / M145)).